The sequence spans 110 residues: Insulin (110 aa).

The N-terminal stretch at 1–24 is a signal peptide; the sequence is MAPWTRLLPLLALLSLWIPAPTRA. Intrachain disulfides connect Cys31/Cys96, Cys43/Cys109, and Cys95/Cys100. Positions 57 to 87 are cleaved as a propeptide — c peptide; the sequence is EAEDLQGKDAELGEAPGAGGLQPSALEAPLQ. Positions 60 to 80 are disordered; it reads DLQGKDAELGEAPGAGGLQPS.

It belongs to the insulin family. Heterodimer of a B chain and an A chain linked by two disulfide bonds.

The protein resides in the secreted. Insulin decreases blood glucose concentration. It increases cell permeability to monosaccharides, amino acids and fatty acids. It accelerates glycolysis, the pentose phosphate cycle, and glycogen synthesis in liver. This chain is Insulin (INS), found in Felis catus (Cat).